Reading from the N-terminus, the 331-residue chain is Ribosomal RNA small subunit methyltransferase H (331 aa).

S-adenosyl-L-methionine-binding positions include 49–51, Asp68, Leu102, Asp116, and Gln123; that span reads GGH.

This sequence belongs to the methyltransferase superfamily. RsmH family.

It localises to the cytoplasm. It catalyses the reaction cytidine(1402) in 16S rRNA + S-adenosyl-L-methionine = N(4)-methylcytidine(1402) in 16S rRNA + S-adenosyl-L-homocysteine + H(+). Specifically methylates the N4 position of cytidine in position 1402 (C1402) of 16S rRNA. This Renibacterium salmoninarum (strain ATCC 33209 / DSM 20767 / JCM 11484 / NBRC 15589 / NCIMB 2235) protein is Ribosomal RNA small subunit methyltransferase H.